The chain runs to 486 residues: 23S rRNA (uracil(1939)-C(5))-methyltransferase RlmD (486 aa).

Positions 10–71 (TVKAPEYLPD…SSFEKAVVMA (62 aa)) constitute a TRAM domain. C84, C94, C97, and C176 together coordinate [4Fe-4S] cluster. Residues Q285, F314, N319, E335, N370, and D391 each contribute to the S-adenosyl-L-methionine site. C442 serves as the catalytic Nucleophile.

It belongs to the class I-like SAM-binding methyltransferase superfamily. RNA M5U methyltransferase family. RlmD subfamily.

It carries out the reaction uridine(1939) in 23S rRNA + S-adenosyl-L-methionine = 5-methyluridine(1939) in 23S rRNA + S-adenosyl-L-homocysteine + H(+). Functionally, catalyzes the formation of 5-methyl-uridine at position 1939 (m5U1939) in 23S rRNA. The chain is 23S rRNA (uracil(1939)-C(5))-methyltransferase RlmD from Polaromonas sp. (strain JS666 / ATCC BAA-500).